The following is a 313-amino-acid chain: Probable F-box protein At3g44130 (313 aa).

The F-box domain maps to 1 to 46; sequence MASGNLPWELEEEILCRLPLGSLVRLRSVCKHWNDFFNDKWFIKKS.

This Arabidopsis thaliana (Mouse-ear cress) protein is Probable F-box protein At3g44130.